A 480-amino-acid polypeptide reads, in one-letter code: Glutamate--tRNA ligase (480 aa).

A 'HIGH' region motif is present at residues 9–19 (PSPTGDPHVGT). Positions 253–257 (KISKR) match the 'KMSKS' region motif. Lys256 contributes to the ATP binding site.

This sequence belongs to the class-I aminoacyl-tRNA synthetase family. Glutamate--tRNA ligase type 1 subfamily. Monomer.

Its subcellular location is the cytoplasm. The catalysed reaction is tRNA(Glu) + L-glutamate + ATP = L-glutamyl-tRNA(Glu) + AMP + diphosphate. Its function is as follows. Catalyzes the attachment of glutamate to tRNA(Glu) in a two-step reaction: glutamate is first activated by ATP to form Glu-AMP and then transferred to the acceptor end of tRNA(Glu). The chain is Glutamate--tRNA ligase from Deinococcus geothermalis (strain DSM 11300 / CIP 105573 / AG-3a).